The chain runs to 248 residues: uncharacterized protein (248 aa).

A signal peptide spans 1–23 (MLKKIVIGVTATAAFGIGAGALA).

The protein localises to the cell outer membrane. This is an uncharacterized protein from Coxiella burnetii (strain RSA 493 / Nine Mile phase I).